The primary structure comprises 59 residues: Potassium channel toxin alpha-KTx 1.2 (59 aa).

The N-terminal stretch at 1 to 22 (MKILSVLLLALIICSIIDWSEG) is a signal peptide. Glutamine 23 carries the pyrrolidone carboxylic acid modification. Disulfide bonds link cysteine 29-cysteine 50, cysteine 35-cysteine 55, and cysteine 39-cysteine 57. Residues 48–55 (GKCMNKKC) are interaction with Ca(2+)-activated K(+) channels.

The protein belongs to the short scorpion toxin superfamily. Potassium channel inhibitor family. Alpha-KTx 01 subfamily. In terms of tissue distribution, expressed by the venom gland.

The protein resides in the secreted. In terms of biological role, blocks calcium-activated potassium channels (Kd=43 nM on KCa1.1/KCNMA1). Has a potent presynaptic facilitatory action, with less effect on direct muscle stimulation. The protein is Potassium channel toxin alpha-KTx 1.2 of Leiurus hebraeus (Hebrew deathstalker scorpion).